The primary structure comprises 130 residues: Protein ApaG (130 aa).

The region spanning 3–127 (SAVTRGIEVT…FSLDVPEQRR (125 aa)) is the ApaG domain.

The protein is Protein ApaG of Brucella abortus (strain S19).